Consider the following 281-residue polypeptide: Ribosomal protein L11 methyltransferase (281 aa).

The S-adenosyl-L-methionine site is built by threonine 131, glycine 152, aspartate 174, and asparagine 217.

Belongs to the methyltransferase superfamily. PrmA family.

Its subcellular location is the cytoplasm. The enzyme catalyses L-lysyl-[protein] + 3 S-adenosyl-L-methionine = N(6),N(6),N(6)-trimethyl-L-lysyl-[protein] + 3 S-adenosyl-L-homocysteine + 3 H(+). Its function is as follows. Methylates ribosomal protein L11. The sequence is that of Ribosomal protein L11 methyltransferase from Phocaeicola vulgatus (strain ATCC 8482 / DSM 1447 / JCM 5826 / CCUG 4940 / NBRC 14291 / NCTC 11154) (Bacteroides vulgatus).